The following is a 66-amino-acid chain: Large ribosomal subunit protein uL29 (66 aa).

It belongs to the universal ribosomal protein uL29 family.

In Agrobacterium fabrum (strain C58 / ATCC 33970) (Agrobacterium tumefaciens (strain C58)), this protein is Large ribosomal subunit protein uL29.